A 257-amino-acid polypeptide reads, in one-letter code: Methylthioribulose-1-phosphate dehydratase (257 aa).

C107 provides a ligand contact to substrate. Zn(2+) contacts are provided by H125 and H127. The active-site Proton donor/acceptor is E148. A Zn(2+)-binding site is contributed by H210.

The protein belongs to the aldolase class II family. MtnB subfamily. Zn(2+) serves as cofactor.

The protein resides in the cytoplasm. It carries out the reaction 5-(methylsulfanyl)-D-ribulose 1-phosphate = 5-methylsulfanyl-2,3-dioxopentyl phosphate + H2O. The protein operates within amino-acid biosynthesis; L-methionine biosynthesis via salvage pathway; L-methionine from S-methyl-5-thio-alpha-D-ribose 1-phosphate: step 2/6. In terms of biological role, catalyzes the dehydration of methylthioribulose-1-phosphate (MTRu-1-P) into 2,3-diketo-5-methylthiopentyl-1-phosphate (DK-MTP-1-P). This chain is Methylthioribulose-1-phosphate dehydratase, found in Lachancea thermotolerans (strain ATCC 56472 / CBS 6340 / NRRL Y-8284) (Yeast).